The following is a 389-amino-acid chain: Probable transcription factor FL (389 aa).

Disordered regions lie at residues 1–41 (MDPN…ANVP) and 140–226 (EHDM…HPFV). Positions 19–39 (PPAPAPVPPPPPPPPPPPPAN) are enriched in pro residues. The span at 159 to 180 (VTGKKQAKKGSAARKGKKARRK) shows a compositional bias: basic residues. The Nuclear localization signal motif lies at 161–168 (GKKQAKKG). A compositionally biased stretch (acidic residues) spans 190 to 201 (QEDEMDCCDEDG). 3 DNA-binding regions span residues 221 to 225 (REHPF), 290 to 297 (NKPKMRHY), and 361 to 364 (YVPT).

It belongs to the FLO/LFY family. Interacts with APO1. As to expression, in very young panicle but not in mature florets, mature leaves, roots or apical meristems.

Its subcellular location is the nucleus. Probable transcription factor. Together with APO1, involved in the temporal regulation of meristem size and identity during both vegetative and reproductive developments through interaction with APO1. Promotes flowering. This chain is Probable transcription factor FL, found in Oryza sativa subsp. japonica (Rice).